The chain runs to 122 residues: Large ribosomal subunit protein uL14 (122 aa).

It belongs to the universal ribosomal protein uL14 family. Part of the 50S ribosomal subunit. Forms a cluster with proteins L3 and L19. In the 70S ribosome, L14 and L19 interact and together make contacts with the 16S rRNA in bridges B5 and B8.

Binds to 23S rRNA. Forms part of two intersubunit bridges in the 70S ribosome. In Heliobacterium modesticaldum (strain ATCC 51547 / Ice1), this protein is Large ribosomal subunit protein uL14.